Reading from the N-terminus, the 356-residue chain is 1-deoxy-D-xylulose 5-phosphate reductoisomerase (356 aa).

The NADPH site is built by Thr-7, Gly-8, Ser-9, Ile-10, Gly-31, Asn-33, and Asn-111. Lys-112 contacts 1-deoxy-D-xylulose 5-phosphate. Residue Glu-113 coordinates NADPH. Asp-131 contributes to the Mn(2+) binding site. 1-deoxy-D-xylulose 5-phosphate-binding residues include Ser-132, Glu-133, Ser-155, and His-178. Glu-133 contributes to the Mn(2+) binding site. NADPH is bound at residue Gly-184. 1-deoxy-D-xylulose 5-phosphate is bound by residues Ser-191, Asn-196, Lys-197, and Glu-200. Glu-200 contacts Mn(2+).

The protein belongs to the DXR family. Mg(2+) serves as cofactor. Requires Mn(2+) as cofactor.

It catalyses the reaction 2-C-methyl-D-erythritol 4-phosphate + NADP(+) = 1-deoxy-D-xylulose 5-phosphate + NADPH + H(+). It participates in isoprenoid biosynthesis; isopentenyl diphosphate biosynthesis via DXP pathway; isopentenyl diphosphate from 1-deoxy-D-xylulose 5-phosphate: step 1/6. Functionally, catalyzes the NADPH-dependent rearrangement and reduction of 1-deoxy-D-xylulose-5-phosphate (DXP) to 2-C-methyl-D-erythritol 4-phosphate (MEP). The polypeptide is 1-deoxy-D-xylulose 5-phosphate reductoisomerase (Campylobacter jejuni subsp. jejuni serotype O:6 (strain 81116 / NCTC 11828)).